The sequence spans 57 residues: uncharacterized protein (57 aa).

The disordered stretch occupies residues 1 to 57 (MITPIGKNSNSNSNSNSNSNSNSNSNSNSNSNSNSNSNSNSNSNSNSNSNSNSNSNN). Residues 8–57 (NSNSNSNSNSNSNSNSNSNSNSNSNSNSNSNSNSNSNSNSNSNSNSNSNN) show a composition bias toward low complexity.

This is an uncharacterized protein from Dictyostelium discoideum (Social amoeba).